Consider the following 235-residue polypeptide: Secreted RxLR effector protein 27 (235 aa).

Residues 1 to 25 (MTNLFTRHTRRSLTALALLSGGVYA) form the signal peptide. The RxLR-dEER motif lies at 36–60 (RSLRVFVTGGQVLWDYRIHFKGIER).

The protein belongs to the RxLR effector family.

It localises to the secreted. It is found in the host cytoplasm. Its subcellular location is the host nucleus. Functionally, effector that acts as a broad suppressor of cell death to interrupt plant immunity. Inhibits cell death induced by cell death-inducing proteins, including the PAMP elicitor INF1 from P.infestans. In Plasmopara viticola (Downy mildew of grapevine), this protein is Secreted RxLR effector protein 27.